Consider the following 414-residue polypeptide: Serine/threonine transporter SstT (414 aa).

A run of 8 helical transmembrane segments spans residues 22 to 42 (GLVL…TIGF), 54 to 74 (IFVK…VMAA), 89 to 109 (IIVL…IAGF), 148 to 168 (AIFK…GLAL), 189 to 209 (IVHV…AETL), 223 to 243 (LLAV…PILV), 305 to 325 (MAGA…TLGL), and 337 to 357 (IVAA…LLLI).

Belongs to the dicarboxylate/amino acid:cation symporter (DAACS) (TC 2.A.23) family.

The protein localises to the cell inner membrane. The enzyme catalyses L-serine(in) + Na(+)(in) = L-serine(out) + Na(+)(out). It catalyses the reaction L-threonine(in) + Na(+)(in) = L-threonine(out) + Na(+)(out). In terms of biological role, involved in the import of serine and threonine into the cell, with the concomitant import of sodium (symport system). The chain is Serine/threonine transporter SstT from Haemophilus influenzae (strain PittGG).